Here is a 546-residue protein sequence, read N- to C-terminus: Chaperonin GroEL 2 (546 aa).

Residues 30–33 (TLGP), K51, 87–91 (DGTTT), G415, 479–481 (NAA), and D495 each bind ATP. Positions 526–546 (KEDAPMPGGMPGGMGGMGMDM) are disordered. A compositionally biased stretch (gly residues) spans 534–546 (GMPGGMGGMGMDM).

The protein belongs to the chaperonin (HSP60) family. As to quaternary structure, forms a cylinder of 14 subunits composed of two heptameric rings stacked back-to-back. Interacts with the co-chaperonin GroES.

Its subcellular location is the cytoplasm. The enzyme catalyses ATP + H2O + a folded polypeptide = ADP + phosphate + an unfolded polypeptide.. In terms of biological role, together with its co-chaperonin GroES, plays an essential role in assisting protein folding. The GroEL-GroES system forms a nano-cage that allows encapsulation of the non-native substrate proteins and provides a physical environment optimized to promote and accelerate protein folding. This Burkholderia lata (strain ATCC 17760 / DSM 23089 / LMG 22485 / NCIMB 9086 / R18194 / 383) protein is Chaperonin GroEL 2.